We begin with the raw amino-acid sequence, 112 residues long: Ribonuclease P protein component (112 aa).

The protein belongs to the RnpA family. Consists of a catalytic RNA component (M1 or rnpB) and a protein subunit.

The catalysed reaction is Endonucleolytic cleavage of RNA, removing 5'-extranucleotides from tRNA precursor.. In terms of biological role, RNaseP catalyzes the removal of the 5'-leader sequence from pre-tRNA to produce the mature 5'-terminus. It can also cleave other RNA substrates such as 4.5S RNA. The protein component plays an auxiliary but essential role in vivo by binding to the 5'-leader sequence and broadening the substrate specificity of the ribozyme. The protein is Ribonuclease P protein component of Mycoplasmopsis synoviae (strain 53) (Mycoplasma synoviae).